We begin with the raw amino-acid sequence, 154 residues long: Large ribosomal subunit protein uL15 (154 aa).

The disordered stretch occupies residues 1-54 (MKLHDLTPAPGSRKPKKRVGRGPGGTDKTAGRGHKGQKSRSGAGKGPFFEGGRS).

It belongs to the universal ribosomal protein uL15 family. As to quaternary structure, part of the 50S ribosomal subunit.

In terms of biological role, binds to the 23S rRNA. This Deinococcus geothermalis (strain DSM 11300 / CIP 105573 / AG-3a) protein is Large ribosomal subunit protein uL15.